A 284-amino-acid chain; its full sequence is 2-dehydro-3-deoxyphosphooctonate aldolase (284 aa).

It belongs to the KdsA family.

The protein resides in the cytoplasm. It carries out the reaction D-arabinose 5-phosphate + phosphoenolpyruvate + H2O = 3-deoxy-alpha-D-manno-2-octulosonate-8-phosphate + phosphate. It participates in carbohydrate biosynthesis; 3-deoxy-D-manno-octulosonate biosynthesis; 3-deoxy-D-manno-octulosonate from D-ribulose 5-phosphate: step 2/3. Its pathway is bacterial outer membrane biogenesis; lipopolysaccharide biosynthesis. The polypeptide is 2-dehydro-3-deoxyphosphooctonate aldolase (Proteus mirabilis (strain HI4320)).